The sequence spans 312 residues: 4-hydroxy-3-methylbut-2-enyl diphosphate reductase (312 aa).

Cys-14 is a [4Fe-4S] cluster binding site. 2 residues coordinate (2E)-4-hydroxy-3-methylbut-2-enyl diphosphate: His-43 and His-76. Positions 43 and 76 each coordinate dimethylallyl diphosphate. The isopentenyl diphosphate site is built by His-43 and His-76. A [4Fe-4S] cluster-binding site is contributed by Cys-98. His-125 contributes to the (2E)-4-hydroxy-3-methylbut-2-enyl diphosphate binding site. His-125 provides a ligand contact to dimethylallyl diphosphate. An isopentenyl diphosphate-binding site is contributed by His-125. Glu-127 functions as the Proton donor in the catalytic mechanism. Residue Thr-165 participates in (2E)-4-hydroxy-3-methylbut-2-enyl diphosphate binding. Cys-195 serves as a coordination point for [4Fe-4S] cluster. (2E)-4-hydroxy-3-methylbut-2-enyl diphosphate-binding residues include Ser-223, Ser-224, Asn-225, and Ser-269. Dimethylallyl diphosphate-binding residues include Ser-223, Ser-224, Asn-225, and Ser-269. Isopentenyl diphosphate contacts are provided by Ser-223, Ser-224, Asn-225, and Ser-269.

This sequence belongs to the IspH family. Requires [4Fe-4S] cluster as cofactor.

The catalysed reaction is isopentenyl diphosphate + 2 oxidized [2Fe-2S]-[ferredoxin] + H2O = (2E)-4-hydroxy-3-methylbut-2-enyl diphosphate + 2 reduced [2Fe-2S]-[ferredoxin] + 2 H(+). It carries out the reaction dimethylallyl diphosphate + 2 oxidized [2Fe-2S]-[ferredoxin] + H2O = (2E)-4-hydroxy-3-methylbut-2-enyl diphosphate + 2 reduced [2Fe-2S]-[ferredoxin] + 2 H(+). It functions in the pathway isoprenoid biosynthesis; dimethylallyl diphosphate biosynthesis; dimethylallyl diphosphate from (2E)-4-hydroxy-3-methylbutenyl diphosphate: step 1/1. The protein operates within isoprenoid biosynthesis; isopentenyl diphosphate biosynthesis via DXP pathway; isopentenyl diphosphate from 1-deoxy-D-xylulose 5-phosphate: step 6/6. Catalyzes the conversion of 1-hydroxy-2-methyl-2-(E)-butenyl 4-diphosphate (HMBPP) into a mixture of isopentenyl diphosphate (IPP) and dimethylallyl diphosphate (DMAPP). Acts in the terminal step of the DOXP/MEP pathway for isoprenoid precursor biosynthesis. This Leptospira interrogans serogroup Icterohaemorrhagiae serovar copenhageni (strain Fiocruz L1-130) protein is 4-hydroxy-3-methylbut-2-enyl diphosphate reductase.